A 1628-amino-acid chain; its full sequence is MDGKEKKSGSKRGSKVFQFDDDADDDEPIGSLLEIMKHKSSKKDKVETESTGKQRQKQVVEKKLSALGKDSEDMDDTLASFRKRLKGNKKGVESGTSRVRNHEGVDTVTNSNLKPIEEANKNEVQSVLLRENGASNSIQKCASETGTLLHKFSGKDKAASPSHEKVETVSSEKEADVFHQITKEESEIPMSEKAVELSRVSVPMPDVHGEVNCTIAPDKHIHLGEPTSESGYYREKNLVMCDCGTQFNFEDRSFESNTQVTLCQKCKYSSHHNASNGGGIQVNTLEDGTAQASPVSIIPCEDENFRGDAISLPNSGKPSTLQRPERIAKKRKLGNMVYEGDVKWENEQGFLDCQSDKSFKGSDKCGFVPSISKEIEIGRAAAVTAGLKAQSVSPIEKIILKEVLKRKGSNQEYLVCRNSILGLWSKNVSRILPVTECGVTGGPSESELPSASLIREVYKFLDQRGYINAGISSVNGKAASSTNQDYDLLQGRQLEESSMASVADSEEGVAFILGQVKAVESTSEGKKCALQNDERDLVGCATSEMLESISKKCEASIIDDNKRSVSMNALQDSTASNVEKHPETFSVAKPALSSTLSSAHSNQMRGRDCVPCEVIDEKKVIVIGAGPAGLTAARHLQRQGFSVTVLEARSRVGGRVFTDRSSLSVPVDLGASIITGIEADVPSERMPDPSVLVCNQLGLELSVLHGFCPLYDTVTGKKVPAELDDALQAEFNSLIDDVDLLVEEIGKERANKMSLEDGLEYGLQRLRMPHDKVNIDKFGLLNSSSKTGIRGPFMQDESWKDDFLNPLERRVMNWHFAHTEYGCAAVLKEVSLPHWNQDEFYGGFGGPHAMIKGGYSRVVESLAEGLDIHLNKIVSDVSYVSDVSAMDNSKHKVRVSTSNGCEYLGDAVLVTVPLGCLKAETIKFSPPLPDWKYASIKQLGFGVLNKVVLEFPTVFWDDSVDYFGATAEETDLRGECFMFWNVKKTVGAPVLIALVVGKAAFEYTNKSKSEHVNHAMMVLRKLFGGDLVPDPVASVVTDWGTDPYSYGAYSYVAIGASGEDYDVLGRPVQNCLFFAGEATCKEHPDTVGGAMMTGVREAVRIIDILRSGNDYTAEIETLEKAQRKSVPVRDEVRDLIKRLEVVELSNVLARQSLLRNMFFSAKTTVGRLHLAKELLNLPGETLKSFAGTKEGLAVLNSWILDSMGKNGTQLLRHCVHILVRVTSDLFALRLSGIGKTVKEKVCAHTSRDIRAIASQLVNVWLDLYRKEKANSGKKSLRQANTTNTSRIRRKLNSPDTDSKGKLSNGNDVKTDEEFEDNQLPMSEEEKAVFAEAEAARAAAEAAAKAFSEAYHNTSLQLPKIPSFHKFARREQYAKMDESDFRKKFPGNVLGRQDCMSEIDSRNCKVRDWYDFPASCLDLDSARIPVDNYSQPSHSNELVSHSKFRECSGESVAADTSFLTGAWVDTGGSSDGFKDSQAIDRWQSQAAAADPEFFNRTLHIKDEEDSIACSTGPPSWKHDQRANECSVSQVTVNKEPHKNHIRSADRLKQGVVDFVASLLMAPYRAKKIDRDVYKSIMKKTATKVMQHTTDVEKAMAVTQFLDSKRKNKIRDFVDKQVDKYMVIPQVPKP.

A disordered region spans residues 1–71; the sequence is MDGKEKKSGS…KKLSALGKDS (71 aa). Over residues 19-28 the composition is skewed to acidic residues; it reads FDDDADDDEP. Basic and acidic residues predominate over residues 43-64; the sequence is KDKVETESTGKQRQKQVVEKKL. One can recognise an SWIRM domain in the interval 378–478; sequence GRAAAVTAGL…AGISSVNGKA (101 aa). 4 residues coordinate FAD: Glu647, Arg649, Arg655, and Glu1077. The interval 1271–1317 is disordered; that stretch reads SGKKSLRQANTTNTSRIRRKLNSPDTDSKGKLSNGNDVKTDEEFEDN.

It belongs to the flavin monoamine oxidase family. It depends on FAD as a cofactor.

Functionally, probable histone demethylase that reduces the levels of histone H3 'Lys-4' methylation in chromatin. This chain is Lysine-specific histone demethylase 1 homolog 3 (LDL3), found in Arabidopsis thaliana (Mouse-ear cress).